Reading from the N-terminus, the 749-residue chain is Catalase-peroxidase (749 aa).

Residues 98–234 (WHAAGTYRVQ…LAASHMGLIY (137 aa)) constitute a cross-link (tryptophyl-tyrosyl-methioninium (Trp-Tyr) (with M-260)). His-99 acts as the Proton acceptor in catalysis. Positions 234 to 260 (YVNPEGPNGEPDPVAAAHDIRTTFGRM) form a cross-link, tryptophyl-tyrosyl-methioninium (Tyr-Met) (with W-98). His-275 is a binding site for heme b.

It belongs to the peroxidase family. Peroxidase/catalase subfamily. Homodimer or homotetramer. Heme b serves as cofactor. Formation of the three residue Trp-Tyr-Met cross-link is important for the catalase, but not the peroxidase activity of the enzyme.

The protein localises to the cytoplasm. It catalyses the reaction H2O2 + AH2 = A + 2 H2O. The catalysed reaction is 2 H2O2 = O2 + 2 H2O. Functionally, bifunctional enzyme with both catalase and broad-spectrum peroxidase activity. The chain is Catalase-peroxidase from Mycosarcoma maydis (Corn smut fungus).